The following is a 297-amino-acid chain: Acetylglutamate kinase (297 aa).

Residues 68-69, Arg90, and Asn195 contribute to the substrate site; that span reads GG.

The protein belongs to the acetylglutamate kinase family. ArgB subfamily.

The protein resides in the cytoplasm. It carries out the reaction N-acetyl-L-glutamate + ATP = N-acetyl-L-glutamyl 5-phosphate + ADP. It functions in the pathway amino-acid biosynthesis; L-arginine biosynthesis; N(2)-acetyl-L-ornithine from L-glutamate: step 2/4. In terms of biological role, catalyzes the ATP-dependent phosphorylation of N-acetyl-L-glutamate. This is Acetylglutamate kinase from Mesorhizobium japonicum (strain LMG 29417 / CECT 9101 / MAFF 303099) (Mesorhizobium loti (strain MAFF 303099)).